A 533-amino-acid polypeptide reads, in one-letter code: Metal transporter nramp1 homolog (533 aa).

The tract at residues methionine 1–glutamate 33 is disordered. Over methionine 1–tryptophan 68 the chain is Cytoplasmic. Positions valine 14 to asparagine 29 are enriched in low complexity. The helical transmembrane segment at isoleucine 69–leucine 89 threads the bilayer. Residues aspartate 90–glycine 101 lie on the Extracellular side of the membrane. A helical transmembrane segment spans residues alanine 102–leucine 122. Topologically, residues glutamine 123 to glutamate 158 are cytoplasmic. A helical transmembrane segment spans residues leucine 159 to leucine 179. The Extracellular portion of the chain corresponds to serine 180 to glycine 182. Residues histidine 183–leucine 203 form a helical membrane-spanning segment. Residues glutamate 204–glutamate 212 are Cytoplasmic-facing. Residues alanine 213–serine 233 traverse the membrane as a helical segment. At lysine 234 to glutamine 256 the chain is on the extracellular side. A glycan (N-linked (GlcNAc...) asparagine) is linked at asparagine 253. A helical transmembrane segment spans residues alanine 257–valine 277. Residues glutamine 278 to alanine 302 are Cytoplasmic-facing. Residues phenylalanine 303 to phenylalanine 323 form a helical membrane-spanning segment. Topologically, residues tyrosine 324–lysine 348 are extracellular. Residues tyrosine 349–tyrosine 368 traverse the membrane as a helical segment. The Cytoplasmic portion of the chain corresponds to serine 369–arginine 387. Residues leucine 388–serine 408 traverse the membrane as a helical segment. The Extracellular portion of the chain corresponds to histidine 409–glutamine 415. A helical membrane pass occupies residues tryptophan 416–threonine 436. At serine 437 to arginine 457 the chain is on the cytoplasmic side. A helical transmembrane segment spans residues phenylalanine 458–isoleucine 478. Residues serine 479–serine 481 lie on the Extracellular side of the membrane. Residues alanine 482–leucine 502 traverse the membrane as a helical segment. The Cytoplasmic portion of the chain corresponds to serine 503–tyrosine 533.

It belongs to the NRAMP family.

It localises to the membrane. Functionally, depletes iron from the phagolysosome in an ATP-dependent process. May rather act as a symporter of protons and metal cations in an ATP-dependent process. Nramp1 overexpression protected cells from L.pneumophila infection. The protein is Metal transporter nramp1 homolog (nramp1) of Dictyostelium discoideum (Social amoeba).